The sequence spans 562 residues: Endochitinase (562 aa).

The N-terminal stretch at 1–20 (MSLLYIILLFTQFLLLPTDA) is a signal peptide. The GH18 domain occupies 27-311 (TNIAVYWGQN…EILKNLLTSA (285 aa)). The Proton donor role is filled by Glu157. Disordered stretches follow at residues 329-358 (TSSASTSSASTSQKKTTQSTTSTQSKSKVT) and 461-484 (TLSPTTTSTSSGSTSSGSTSSDST). The chitin-binding, high affinity stretch occupies residues 481 to 562 (SDSTARTLAK…NFSYLESNYF (82 aa)). Asn553 carries an N-linked (GlcNAc...) asparagine glycan.

This sequence belongs to the glycosyl hydrolase 18 family. Chitinase class V subfamily. In terms of processing, extensively glycosylated with a series of short O-linked mannose oligosaccharides ranging in size from Man(2) to Man(5).

Its subcellular location is the secreted. It is found in the cell wall. It carries out the reaction Random endo-hydrolysis of N-acetyl-beta-D-glucosaminide (1-&gt;4)-beta-linkages in chitin and chitodextrins.. Functionally, chitinase is required for cell separation during growth of S.cerevisiae. This Saccharomyces cerevisiae (strain ATCC 204508 / S288c) (Baker's yeast) protein is Endochitinase (CTS1).